The following is a 360-amino-acid chain: Vignain (360 aa).

Residues 1–20 (MQKFILLALSLALVLAITES) form the signal peptide. Residues 21 to 124 (FDFHEKELES…NGTFMYEKVD (104 aa)) constitute a propeptide, activation peptide. Residue N115 is glycosylated (N-linked (GlcNAc...) asparagine). 3 disulfide bridges follow: C147–C189, C181–C222, and C280–C332. Residue C150 is part of the active site. Residues H286 and N307 contribute to the active site. Residues 341–360 (PIKKSSNNPSGIKSSPKDEL) form a disordered region. A compositionally biased stretch (polar residues) spans 344-353 (KSSNNPSGIK). Residues 354–360 (SSPKDEL) constitute a propeptide, removed in mature form. A prevents secretion from ER region spans residues 357-360 (KDEL).

This sequence belongs to the peptidase C1 family. In terms of processing, the potential N-glycosylation site at Asn-115 is not glycosylated.

The protein resides in the cytoplasmic vesicle. Low pH triggers activation of the protease and removal of the propeptide and the KDEL motif. Functionally, involved in programmed cell death. Shows a pronounced preference for hydrophobic residues in the P2 position and no obvious preference in the P1 position of the cleavage site. Accepts proline at the P1 and P1' positions. The chain is Vignain (CYSEP) from Ricinus communis (Castor bean).